We begin with the raw amino-acid sequence, 324 residues long: Probable 6-phosphogluconolactonase 4, chloroplastic (324 aa).

The N-terminal 63 residues, 1–63 (MSVSAAVAAA…PAMATDGAAA (63 aa)), are a transit peptide targeting the chloroplast. Residues 19-43 (ARHRSPPASRVAATSRGRPFSSGPH) form a disordered region.

Belongs to the glucosamine/galactosamine-6-phosphate isomerase family. 6-phosphogluconolactonase subfamily.

The protein localises to the plastid. The protein resides in the chloroplast. It carries out the reaction 6-phospho-D-glucono-1,5-lactone + H2O = 6-phospho-D-gluconate + H(+). It functions in the pathway carbohydrate degradation; pentose phosphate pathway; D-ribulose 5-phosphate from D-glucose 6-phosphate (oxidative stage): step 2/3. In terms of biological role, hydrolysis of 6-phosphogluconolactone to 6-phosphogluconate. This Oryza sativa subsp. japonica (Rice) protein is Probable 6-phosphogluconolactonase 4, chloroplastic.